A 336-amino-acid polypeptide reads, in one-letter code: Pyridoxal 5'-phosphate synthase subunit PdxS (336 aa).

Aspartate 30 contributes to the D-ribose 5-phosphate binding site. Lysine 87 (schiff-base intermediate with D-ribose 5-phosphate) is an active-site residue. D-ribose 5-phosphate is bound at residue glycine 159. A D-glyceraldehyde 3-phosphate-binding site is contributed by arginine 171. D-ribose 5-phosphate-binding positions include glycine 257 and 278–279; that span reads GS.

It belongs to the PdxS/SNZ family. As to quaternary structure, in the presence of PdxT, forms a dodecamer of heterodimers.

It catalyses the reaction aldehydo-D-ribose 5-phosphate + D-glyceraldehyde 3-phosphate + L-glutamine = pyridoxal 5'-phosphate + L-glutamate + phosphate + 3 H2O + H(+). It functions in the pathway cofactor biosynthesis; pyridoxal 5'-phosphate biosynthesis. Its function is as follows. Catalyzes the formation of pyridoxal 5'-phosphate from ribose 5-phosphate (RBP), glyceraldehyde 3-phosphate (G3P) and ammonia. The ammonia is provided by the PdxT subunit. Can also use ribulose 5-phosphate and dihydroxyacetone phosphate as substrates, resulting from enzyme-catalyzed isomerization of RBP and G3P, respectively. This chain is Pyridoxal 5'-phosphate synthase subunit PdxS, found in Thermoplasma acidophilum (strain ATCC 25905 / DSM 1728 / JCM 9062 / NBRC 15155 / AMRC-C165).